Reading from the N-terminus, the 212-residue chain is Ribosomal RNA small subunit methyltransferase G (212 aa).

S-adenosyl-L-methionine is bound by residues Gly-76, Met-81, 127–128, and Arg-145; that span reads VE.

This sequence belongs to the methyltransferase superfamily. RNA methyltransferase RsmG family.

Its subcellular location is the cytoplasm. It catalyses the reaction guanosine(527) in 16S rRNA + S-adenosyl-L-methionine = N(7)-methylguanosine(527) in 16S rRNA + S-adenosyl-L-homocysteine. Its function is as follows. Specifically methylates the N7 position of guanine in position 527 of 16S rRNA. The polypeptide is Ribosomal RNA small subunit methyltransferase G (Acinetobacter baylyi (strain ATCC 33305 / BD413 / ADP1)).